The sequence spans 627 residues: MEGLAGYVYKAASEGKVLTLAALLLNRSESDIRYLLGYVSQQGGQRSTPLIIAARNGHAKVVRLLLEHYRVQTQQTGTVRFDGYVIDGATALWCAAGAGHFEVVKLLVSHGANVNHTTVTNSTPLRAACFDGRLDIVKYLVENNANISIANKYDNTCLMIAAYKGHTDVVRYLLEQRADPNAKAHCGATALHFAAEAGHIDIVKELIKWRAAIVVNGHGMTPLKVAAESCKADVVELLLSHADCDRRSRIEALELLGASFANDRENYDIIKTYHYLYLAMLERFQDGDNILEKEVLPPIHAYGNRTECRNPQELESIRQDRDALHMEGLIVRERILGADNIDVSHPIIYRGAVYADNMEFEQCIKLWLHALHLRQKGNRNTHKDLLRFAQVFSQMIHLNETVKAPDIECVLRCSVLEIEQSMNRVKNISDADVHNAMDNYECNLYTFLYLVCISTKTQCSEEDQCKINKQIYNLIHLDPRTREGFTLLHLAVNSNTPVDDFHTNDVCSFPNALVTKLLLDCGAEVNAVDNEGNSALHIIVQYNRPISDFLTLHSIIISLVEAGAHTDMTNKQNKTPLDKSTTGVSEILLKTQMKMSLKCLAARAVRANDINYQDQIPRTLEEFVGFH.

4 ANK repeats span residues 45–74 (QRST…VQTQ), 87–116 (DGAT…NVNH), 120–149 (TNST…NISI), and 153–182 (YDNT…DPNA). Zn(2+)-binding residues include H185, C186, and H218. 2 ANK repeats span residues 186 to 215 (CGAT…AIVV) and 218 to 248 (HGMT…DRRS). The TPR repeat unit spans residues 344 to 377 (SHPIIYRGAVYADNMEFEQCIKLWLHALHLRQKG). ANK repeat units follow at residues 483-527 (EGFT…EVNA) and 531-568 (EGNS…HTDM).

This sequence belongs to the fem-1 family. Component of a CRL2 E3 ubiquitin-protein ligase complex, also named ECS (Elongin BC-CUL2/5-SOCS-box protein) complex, composed of CUL2, Elongin BC (ELOB and ELOC), RBX1 and substrate-specific adapter FEM1B. Homooligomer. Interacts with PPM1F and PHTF1. Interacts with the death domain of FAS/TNFRSF6 and TNFRSF1A. Interacts with CHEK1. Interacts with NKX3-1. Widely expressed. Highly expressed in testis. Weakly expressed in other tissues.

It localises to the cytoplasm. It is found in the nucleus. Its pathway is protein modification; protein ubiquitination. Activity of the CRL2(FEM1B) complex toward FNIP1 is inhibited by BEX family proteins (BEX1, BEX2, BEX3, BEX4 and/or BEX5) in absence of reductive stress. Mechanistically, BEX proteins act as pseudosubstrate inhibitors that associate with FEM1B via zinc in absence of reductive stress, thereby preventing association between FEM1B and FNIP1. In terms of biological role, substrate-recognition component of a Cul2-RING (CRL2) E3 ubiquitin-protein ligase complex of the DesCEND (destruction via C-end degrons) pathway, which recognizes a C-degron located at the extreme C terminus of target proteins, leading to their ubiquitination and degradation. The C-degron recognized by the DesCEND pathway is usually a motif of less than ten residues and can be present in full-length proteins, truncated proteins or proteolytically cleaved forms. The CRL2(FEM1B) complex specifically recognizes proteins ending with -Gly-Leu-Asp-Arg, such as CDK5R1, leading to their ubiquitination and degradation. Also acts as a regulator of the reductive stress response by mediating ubiquitination of reduced FNIP1: in response to reductive stress, the CRL2(FEM1B) complex specifically recognizes a conserved Cys degron in FNIP1 when this degron is reduced, leading to FNIP1 degradation and subsequent activation of mitochondria to recalibrate reactive oxygen species (ROS). Mechanistically, recognizes and binds reduced FNIP1 through two interface zinc ions, which act as a molecular glue that recruit reduced FNIP1 to FEM1B. Promotes ubiquitination of GLI1, suppressing GLI1 transcriptional activator activity. Promotes ubiquitination and degradation of ANKRD37. Promotes ubiquitination and degradation of SLBP. Involved in apoptosis by acting as a death receptor-associated protein that mediates apoptosis. Also involved in glucose homeostasis in pancreatic islet. May also act as an adapter/mediator in replication stress-induced signaling that leads to the activation of CHEK1. The protein is Protein fem-1 homolog B of Homo sapiens (Human).